The following is an 841-amino-acid chain: MMARVRLAAALIPATAILSCLRTESWDPCVQVVPNISYQCMELNLYKIPDNIPISTKMLDLSFNYLRHLGSHNFSSFPELQVLDLSRCEIKIIEDDTFQGLNHLSTLILTGNPIQSLAWGAFSGLSSLQKLVAVETNLVSLNDFPIGHLKTLKELNVAHNFIHSFKLPEYFSNLPNLEHLDLSNNKIQNIYYEDVKVLHQMPLLNLSLDLSLNPLDFIEPGTFKEIKLNGLTLRSNFNSSHVMKTCIQGLAGLKINRLVLGEFKNERKLKGFDRSILEGLCNLTIEQFRIAYLDEFSGDDTDLFNCLENVSVISLLSVSLGSLQALLKDFRWQHLEIINCDFDKFPALKLSSLKKFVFTDNKDISSFTEFQLPSLQYLDLRRNHLSFKGCCSHADFGTTNLKHLDLSFNDVITLGSNFMGLEKLEHLDFQHSTLKQINAFSVFLSLRNLRYLDISYTNVRIVFHGIFTGLVSLKTLKMAGNTFQDNLLPDIFTELTNLTVLDLSKCQLEQVAQTAFHSLSSLQVLNMSHNKLLSLDTFLYEPLHLLRILDCSFNRIMDSKEQDLQNLPRNLTWLNLTQNAFACVCEHQRFLQWVKDQRQLLVGAEQMMCAEPLDMKDMPVLSFRNATCQMSKMIISVSVVTVLLVSVVGVLVYKFYFHLMLLAGCKKYGRGESTYGAFVIYSSQDEDWVRNELVKNLEEGVPPFQLCLHYRDFIPGVAIAANIIQEGFHKSRKVIVVVSQHFIQSRWCIFEYEIAQTWQFLSSRAGIIFIVLQKLEKSLLRQQVELYRLLSRNTYLEWEDSVLGRHVFWRRLRKALLAGKPQSPEGTADAETNPQEATTST.

The signal sequence occupies residues 1–23 (MMARVRLAAALIPATAILSCLRT). Residues 24 to 632 (ESWDPCVQVV…FRNATCQMSK (609 aa)) lie on the Extracellular side of the membrane. Cys29 and Cys40 are disulfide-bonded. Asn35 and Asn73 each carry an N-linked (GlcNAc...) asparagine glycan. 7 LRR repeats span residues 55–76 (STKMLDLSFNYLRHLGSHNFSS), 79–100 (ELQVLDLSRCEIKIIEDDTFQG), 103–124 (HLSTLILTGNPIQSLAWGAFSG), 127–148 (SLQKLVAVETNLVSLNDFPIGH), 151–172 (TLKELNVAHNFIHSFKLPEYFS), 176–197 (NLEHLDLSNNKIQNIYYEDVKV), and 205–225 (NLSLDLSLNPLDFIEPGTFKE). N-linked (GlcNAc...) asparagine glycosylation is found at Asn205, Asn238, Asn282, and Asn309. Cys281 and Cys306 are disulfide-bonded. 9 LRR repeats span residues 352–373 (SLKKFVFTDNKDISSFTEFQLP), 374–395 (SLQYLDLRRNHLSFKGCCSHAD), 400–422 (NLKHLDLSFNDVITLGSNFMGLE), 423–444 (KLEHLDFQHSTLKQINAFSVFL), 448–469 (NLRYLDISYTNVRIVFHGIFTG), 472–495 (SLKTLKMAGNTFQDNLLPDIFTEL), 497–518 (NLTVLDLSKCQLEQVAQTAFHS), 521–542 (SLQVLNMSHNKLLSLDTFLYEP), and 545–568 (LLRILDCSFNRIMDSKEQDLQNLP). Cys390 and Cys391 are joined by a disulfide. Asn497 and Asn526 each carry an N-linked (GlcNAc...) asparagine glycan. Residues Asn570 and Asn575 are each glycosylated (N-linked (GlcNAc...) asparagine). One can recognise an LRRCT domain in the interval 579–630 (NAFACVCEHQRFLQWVKDQRQLLVGAEQMMCAEPLDMKDMPVLSFRNATCQM). 2 disulfides stabilise this stretch: Cys583/Cys609 and Cys585/Cys628. N-linked (GlcNAc...) asparagine glycosylation is present at Asn625. The chain crosses the membrane as a helical span at residues 633–653 (MIISVSVVTVLLVSVVGVLVY). The Cytoplasmic portion of the chain corresponds to 654–841 (KFYFHLMLLA…TNPQEATTST (188 aa)). Residues 673-816 (STYGAFVIYS…VFWRRLRKAL (144 aa)) enclose the TIR domain. The disordered stretch occupies residues 820–841 (KPQSPEGTADAETNPQEATTST). The segment covering 830 to 841 (AETNPQEATTST) has biased composition (polar residues).

This sequence belongs to the Toll-like receptor family. As to quaternary structure, belongs to the lipopolysaccharide (LPS) receptor, a multi-protein complex containing at least CD14, LY96 and TLR4. Binding to bacterial LPS leads to homodimerization. Interacts with LY96 via the extracellular domain. Interacts with MYD88 and TIRAP via their respective TIR domains. Interacts with TICAM2. Interacts with NOX4. Interacts with CNPY3 and HSP90B1; this interaction is required for proper folding in the endoplasmic reticulum. Interacts with MAP3K21; this interaction leads to negative regulation of TLR4 signaling. Interacts with CD36, following CD36 stimulation by oxLDL or amyloid-beta 42, and forms a heterodimer with TLR6. The trimeric complex is internalized and triggers inflammatory response. LYN kinase activity facilitates TLR4-TLR6 heterodimerization and signal initiation. Interacts with TICAM1 in response to LPS in a WDFY1-dependent manner. Interacts with WDFY1 in response to LPS. Interacts with SMPDL3B. Interacts with CEACAM1; upon lipopolysaccharide stimulation, forms a complex including TLR4 and the phosphorylated form of SYK and CEACAM1, which in turn, recruits PTPN6 that dephosphorylates SYK, reducing the production of reactive oxygen species (ROS) and lysosome disruption, which in turn, reduces the activity of the inflammasome. Interacts with RFTN1; the interaction occurs in response to lipopolysaccharide stimulation. Interacts with SCIMP; the interaction occurs in response to lipopolysaccharide stimulation and is enhanced by phosphorylation of SCIMP by LYN. This interaction facilitates the phosphorylation of TLR4 by LYN which elicits a selective cytokine response in macrophages. Interacts with TRAF3IP3. Interacts with TREM1; this interaction enhances TLR4-mediated inflammatory response. Interacts with ZG16B/PAUF. Interacts with CD82; this interaction inhibits TLR4-mediated signaling pathway. Post-translationally, phosphorylated on tyrosine residues by LYN after binding lipopolysaccharide. Ubiquitinated by RNF128 via 'Lys-28'-linked polyubiquitin chains, leading to proteasomal degradation.

It is found in the cell membrane. The protein resides in the early endosome. The protein localises to the cell projection. It localises to the ruffle. In terms of biological role, transmembrane receptor that functions as a pattern recognition receptor recognizing pathogen- and damage-associated molecular patterns (PAMPs and DAMPs) to induce innate immune responses via downstream signaling pathways. At the plasma membrane, cooperates with LY96 to mediate the innate immune response to bacterial lipopolysaccharide (LPS). Also involved in LPS-independent inflammatory responses triggered by free fatty acids, such as palmitate, and Ni(2+). Mechanistically, acts via MYD88, TIRAP and TRAF6, leading to NF-kappa-B activation, cytokine secretion and the inflammatory response. Alternatively, CD14-mediated TLR4 internalization via endocytosis is associated with the initiation of a MYD88-independent signaling via the TICAM1-TBK1-IRF3 axis leading to type I interferon production. In addition to the secretion of proinflammatory cytokines, initiates the activation of NLRP3 inflammasome and formation of a positive feedback loop between autophagy and NF-kappa-B signaling cascade. In complex with TLR6, promotes inflammation in monocytes/macrophages by associating with TLR6 and the receptor CD86. Upon ligand binding, such as oxLDL or amyloid-beta 42, the TLR4:TLR6 complex is internalized and triggers inflammatory response, leading to NF-kappa-B-dependent production of CXCL1, CXCL2 and CCL9 cytokines, via MYD88 signaling pathway, and CCL5 cytokine, via TICAM1 signaling pathway. In myeloid dendritic cells, vesicular stomatitis virus glycoprotein G but not LPS promotes the activation of IRF7, leading to type I IFN production in a CD14-dependent manner. This Boselaphus tragocamelus (Nilgai) protein is Toll-like receptor 4 (TLR4).